The chain runs to 59 residues: MRCLPVFIILLLLIPSAASVAQPKTKDDVALASFYDNAKRTLQRHWAKSLCCPEDAWCC.

Residues 1–19 (MRCLPVFIILLLLIPSAAS) form the signal peptide. Positions 20-47 (VAQPKTKDDVALASFYDNAKRTLQRHWA) are excised as a propeptide.

The protein belongs to the conotoxin T superfamily. Contains 2 disulfide bonds that can be either 'C1-C3, C2-C4' or 'C1-C4, C2-C3', since these disulfide connectivities have been observed for conotoxins with cysteine framework V (for examples, see AC P0DQQ7 and AC P81755). Expressed by the venom duct.

The protein resides in the secreted. In Conus tessulatus (Tessellate cone), this protein is Conotoxin Ts-03.